The chain runs to 553 residues: Glucagon-like peptide 2 receptor (553 aa).

The Extracellular segment spans residues 1–173; the sequence is MKLGSSRAGP…SFKQNVDRYA (173 aa). Disulfide bonds link Cys83-Cys105, Cys96-Cys137, and Cys118-Cys159. Asn97, Asn113, Asn148, and Asn162 each carry an N-linked (GlcNAc...) asparagine glycan. Residues 174-198 traverse the membrane as a helical segment; it reads LLSTLQLMYTVGYSFSLISLFLALT. The Cytoplasmic portion of the chain corresponds to 199–210; that stretch reads LLLFLRKLHCTR. Residues 211–235 form a helical membrane-spanning segment; sequence NYIHMNLFASFILRTLAVLVKDVVF. Residues 236–261 lie on the Extracellular side of the membrane; sequence YNSYSKRPDNENGWMSYLSEMSTSCR. Residues 262–285 form a helical membrane-spanning segment; sequence SVQVLLHYFVGANYLWLLVEGLYL. Topologically, residues 286-299 are cytoplasmic; it reads HTLLEPTVLPERRL. A helical membrane pass occupies residues 300–321; it reads WPRYLLLGWAFPVLFVVPWGFA. Over 322–339 the chain is Extracellular; the sequence is RAHLENTGCWTTNGNKKI. Residues 340-362 form a helical membrane-spanning segment; it reads WWIIRGPMMLCVTVNFFIFLKIL. The Cytoplasmic portion of the chain corresponds to 363 to 386; the sequence is KLLISKLKAHQMCFRDYKYRLAKS. Residues 387–405 form a helical membrane-spanning segment; that stretch reads TLVLIPLLGVHEILFSFIT. Over 406–417 the chain is Extracellular; that stretch reads DDQVEGFAKLIR. The chain crosses the membrane as a helical span at residues 418 to 438; sequence LFIQLTLSSFHGFLVALQYGF. The Cytoplasmic portion of the chain corresponds to 439–550; it reads ANGEVKAELR…ANTMEEILEE (112 aa).

Belongs to the G-protein coupled receptor 2 family.

It is found in the cell membrane. Its function is as follows. This is a receptor for glucagon-like peptide 2. The activity of this receptor is mediated by G proteins which activate adenylyl cyclase. This chain is Glucagon-like peptide 2 receptor (GLP2R), found in Homo sapiens (Human).